Here is a 126-residue protein sequence, read N- to C-terminus: Aspartate 1-decarboxylase (126 aa).

The active-site Schiff-base intermediate with substrate; via pyruvic acid is the Ser-25. Residue Ser-25 is modified to Pyruvic acid (Ser). A substrate-binding site is contributed by Thr-57. The active-site Proton donor is the Tyr-58. 73–75 (GAA) lines the substrate pocket.

Belongs to the PanD family. In terms of assembly, heterooctamer of four alpha and four beta subunits. It depends on pyruvate as a cofactor. In terms of processing, is synthesized initially as an inactive proenzyme, which is activated by self-cleavage at a specific serine bond to produce a beta-subunit with a hydroxyl group at its C-terminus and an alpha-subunit with a pyruvoyl group at its N-terminus.

The protein resides in the cytoplasm. The catalysed reaction is L-aspartate + H(+) = beta-alanine + CO2. Its pathway is cofactor biosynthesis; (R)-pantothenate biosynthesis; beta-alanine from L-aspartate: step 1/1. Catalyzes the pyruvoyl-dependent decarboxylation of aspartate to produce beta-alanine. This chain is Aspartate 1-decarboxylase, found in Methylobacillus flagellatus (strain ATCC 51484 / DSM 6875 / VKM B-1610 / KT).